Here is a 352-residue protein sequence, read N- to C-terminus: Histidinol-phosphate aminotransferase 1 (352 aa).

Lys211 is subject to N6-(pyridoxal phosphate)lysine.

This sequence belongs to the class-II pyridoxal-phosphate-dependent aminotransferase family. Histidinol-phosphate aminotransferase subfamily. Homodimer. Requires pyridoxal 5'-phosphate as cofactor.

It catalyses the reaction L-histidinol phosphate + 2-oxoglutarate = 3-(imidazol-4-yl)-2-oxopropyl phosphate + L-glutamate. Its pathway is amino-acid biosynthesis; L-histidine biosynthesis; L-histidine from 5-phospho-alpha-D-ribose 1-diphosphate: step 7/9. The polypeptide is Histidinol-phosphate aminotransferase 1 (Haemophilus influenzae (strain 86-028NP)).